We begin with the raw amino-acid sequence, 549 residues long: Cation/acetate symporter ActP (549 aa).

Over 1-32 (MKRVLTALAAALPFAAHAADAISGAVERQPTN) the chain is Periplasmic. The helical transmembrane segment at 33 to 55 (WQAIIMFLIFVVFTLGITYWASK) threads the bilayer. Over 56–75 (RVRSRSDYYTAGGNITGFQN) the chain is Cytoplasmic. The chain crosses the membrane as a helical span at residues 76-98 (GLAIAGDYMSAASFLGISALVFT). At 99-102 (SGYD) the chain is on the periplasmic side. A helical transmembrane segment spans residues 103–125 (GLIYSLGFLVGWPIILFLIAERL). The Cytoplasmic segment spans residues 126 to 145 (RNLGRYTFADVASYRLKQGP). Residues 146–168 (IRILSACGSLVVVALYLIAQMVG) form a helical membrane-spanning segment. Over 169–182 (AGKLIELLFGLNYH) the chain is Periplasmic. Residues 183 to 205 (IAVVLVGVLMMMYVLFGGMLATT) form a helical membrane-spanning segment. Residues 206–211 (WVQIIK) are Cytoplasmic-facing. A helical membrane pass occupies residues 212–234 (AVLLLFGASFMAFMVMKHVGFSF). Topologically, residues 235–260 (NNLFTEAMAVHPKGTAIMSPGGLVQD) are periplasmic. The chain crosses the membrane as a helical span at residues 261–283 (PISALSLGLGLIFGTAGLPHILM). Residues 284 to 302 (RFFTVSDAREARKSVFYAT) lie on the Cytoplasmic side of the membrane. Residues 303 to 325 (GFMGYFYILTFIIGFGAIMLVGA) form a helical membrane-spanning segment. Over 326–361 (NPAYKDAAGALIGGNNMAAVHLANAVGGNLFLGFIS) the chain is Periplasmic. A helical transmembrane segment spans residues 362-384 (AVAFATILAVVAGLTLAGASAVS). The Cytoplasmic portion of the chain corresponds to 385-403 (HDLYANVFRKGATEREELK). Residues 404–423 (VSKITVLVLDVIAIILGVLF) traverse the membrane as a helical segment. The Periplasmic portion of the chain corresponds to 424–427 (ENQN). Residues 428–450 (IAFMVGLAFAIAASCNFPIILLS) form a helical membrane-spanning segment. The Cytoplasmic segment spans residues 451-461 (MYWSKLTTRGA). Residues 462-484 (MLGGWLGLLTAVVLMILGPTIWV) form a helical membrane-spanning segment. The Periplasmic portion of the chain corresponds to 485–493 (QILGHEKAI). Residues 494-516 (FPYEYPALFSISVAFLGIWFFSA) traverse the membrane as a helical segment. At 517 to 549 (TDNSAEGNREREQFRAQFIRSQTGFGVQQGRAH) the chain is on the cytoplasmic side.

This sequence belongs to the sodium:solute symporter (SSF) (TC 2.A.21) family.

It is found in the cell inner membrane. In terms of biological role, transports acetate. The sequence is that of Cation/acetate symporter ActP (actP) from Salmonella typhi.